The sequence spans 331 residues: Tetraacyldisaccharide 4'-kinase (331 aa).

Residue 60–67 (TIGGTGKT) participates in ATP binding.

Belongs to the LpxK family.

The catalysed reaction is a lipid A disaccharide + ATP = a lipid IVA + ADP + H(+). Its pathway is glycolipid biosynthesis; lipid IV(A) biosynthesis; lipid IV(A) from (3R)-3-hydroxytetradecanoyl-[acyl-carrier-protein] and UDP-N-acetyl-alpha-D-glucosamine: step 6/6. Its function is as follows. Transfers the gamma-phosphate of ATP to the 4'-position of a tetraacyldisaccharide 1-phosphate intermediate (termed DS-1-P) to form tetraacyldisaccharide 1,4'-bis-phosphate (lipid IVA). This chain is Tetraacyldisaccharide 4'-kinase, found in Pseudomonas syringae pv. tomato (strain ATCC BAA-871 / DC3000).